The sequence spans 562 residues: MASSNNDGPIEPEAEPWRITQNDHLEQDLLEEDAESQERVDIPVDDVEKAFSFKKLWAFTGPGFLMSIAYLDPGNIESDLQSGAQAAYKLLWVLLSAHIIGMLLQRMSARLGVVSGKHMAEVAYQFYPRLPRIILWLMIEIAIVCSDMQEVIGTAIAIFLLSKGFVPLYVGVFITILDTFTFLLIDRYGIRKLELIFGFLILTMTVSFGYEFVVVKPPIGEVISGMVVPWCAGCGKGEFMQAISVVGAVIMPHNLYLHSALVKSRRVDRKDRRRVAEANKYFTLESAIALFLSFFINLFVVAVFAHGLYQKTNADVREMCIARHDIPDADIFPNNTEPVEVDIYKGGIYLGCQFGAIAMFIWGIGIFAAGQSSTMTGTYTGQFVMEGFVKIEWPKWKRVLITRAIAITPTLVLTFYSQGVQNLTGMNDFLNCVQMIQLPFALIPIITFTSSRKIMHDFRSSKVFQIFALITSALILSINVYFISDYVFSRLGSEWYIIMVLAPITFAYVLFVLYLALYCLVSCEIIPDTVSIRGFSFNKSYENDAPWLAVDSSAVHDNAGYQ.

The Cytoplasmic segment spans residues 1–55 (MASSNNDGPIEPEAEPWRITQNDHLEQDLLEEDAESQERVDIPVDDVEKAFSFKK). The chain crosses the membrane as a helical span at residues 56 to 76 (LWAFTGPGFLMSIAYLDPGNI). Residues 77–83 (ESDLQSG) are Extracellular-facing. The helical transmembrane segment at 84-104 (AQAAYKLLWVLLSAHIIGMLL) threads the bilayer. The Cytoplasmic portion of the chain corresponds to 105-140 (QRMSARLGVVSGKHMAEVAYQFYPRLPRIILWLMIE). A helical transmembrane segment spans residues 141–161 (IAIVCSDMQEVIGTAIAIFLL). The Extracellular portion of the chain corresponds to 162–164 (SKG). A helical transmembrane segment spans residues 165-185 (FVPLYVGVFITILDTFTFLLI). Topologically, residues 186–194 (DRYGIRKLE) are cytoplasmic. A helical membrane pass occupies residues 195–215 (LIFGFLILTMTVSFGYEFVVV). The Extracellular segment spans residues 216 to 241 (KPPIGEVISGMVVPWCAGCGKGEFMQ). A helical transmembrane segment spans residues 242–262 (AISVVGAVIMPHNLYLHSALV). The Cytoplasmic portion of the chain corresponds to 263–287 (KSRRVDRKDRRRVAEANKYFTLESA). Residues 288 to 308 (IALFLSFFINLFVVAVFAHGL) traverse the membrane as a helical segment. Residues 309–347 (YQKTNADVREMCIARHDIPDADIFPNNTEPVEVDIYKGG) are Extracellular-facing. Residue Asn334 is glycosylated (N-linked (GlcNAc...) asparagine). A helical membrane pass occupies residues 348-368 (IYLGCQFGAIAMFIWGIGIFA). Residues 369 to 398 (AGQSSTMTGTYTGQFVMEGFVKIEWPKWKR) lie on the Cytoplasmic side of the membrane. Residues 399-419 (VLITRAIAITPTLVLTFYSQG) traverse the membrane as a helical segment. Residues 420–428 (VQNLTGMND) are Extracellular-facing. An N-linked (GlcNAc...) asparagine glycan is attached at Asn422. A helical membrane pass occupies residues 429–449 (FLNCVQMIQLPFALIPIITFT). The Cytoplasmic portion of the chain corresponds to 450–462 (SSRKIMHDFRSSK). A helical transmembrane segment spans residues 463-483 (VFQIFALITSALILSINVYFI). The Extracellular segment spans residues 484–496 (SDYVFSRLGSEWY). A helical transmembrane segment spans residues 497–517 (IIMVLAPITFAYVLFVLYLAL). Residues 518-562 (YCLVSCEIIPDTVSIRGFSFNKSYENDAPWLAVDSSAVHDNAGYQ) are Cytoplasmic-facing.

This sequence belongs to the NRAMP family. In terms of tissue distribution, expressed in dopaminergic neurons (at protein level). Expressed predominantly in anterior and posterior intestine, rectal gland cell, H-shaped excretory cell, vulva cells, proximal uterus and spermatheca in adults. Weakly expressed in hyp7 hypodermis, pharyngeal muscles and some anterior sensory, ring and posterior head neurons in adults. Expressed in the anchor cell at the larval stage.

It is found in the apical cell membrane. The protein localises to the cytoplasmic vesicle membrane. Its function is as follows. Probable divalent metal ion transporter which regulates Mn(2+) uptake. The polypeptide is NRAMP-like transporter smf-1 (smf-1) (Caenorhabditis elegans).